We begin with the raw amino-acid sequence, 594 residues long: Aspartate--tRNA(Asp/Asn) ligase (594 aa).

Glu175 contacts L-aspartate. The segment at 199–202 is aspartate; that stretch reads QIYK. 2 residues coordinate L-aspartate: Arg221 and His454. 221 to 223 contributes to the ATP binding site; that stretch reads RDE. Glu488 contacts ATP. An L-aspartate-binding site is contributed by Arg495. 540–543 serves as a coordination point for ATP; it reads GIDR.

It belongs to the class-II aminoacyl-tRNA synthetase family. Type 1 subfamily. As to quaternary structure, homodimer.

Its subcellular location is the cytoplasm. The catalysed reaction is tRNA(Asx) + L-aspartate + ATP = L-aspartyl-tRNA(Asx) + AMP + diphosphate. Its function is as follows. Aspartyl-tRNA synthetase with relaxed tRNA specificity since it is able to aspartylate not only its cognate tRNA(Asp) but also tRNA(Asn). Reaction proceeds in two steps: L-aspartate is first activated by ATP to form Asp-AMP and then transferred to the acceptor end of tRNA(Asp/Asn). The protein is Aspartate--tRNA(Asp/Asn) ligase of Chelativorans sp. (strain BNC1).